A 788-amino-acid polypeptide reads, in one-letter code: MDPEFGRGMAPRKREPWRTTLLLAYQSLGVVYGDLSISPLYVYKSTFAEDITHSESNEEIFGVLSFVFWTLTLIPLIKYVSIVLRADDNGEGGTFALYSLICRHANVSLLPNRQVADEELSTYKLEYPPEVANRSRIKEWLEKHKTLQTALLIMVMIGTCMVIGDGVLTPAISVFSAVSGLELSLSRDQHEYAVIPITCVILVFLFALQHYGTHRVGFLFAPIVLAWLICMSMLGLYNIIHWNPQVYRALNPYYMLKFLRKTKKSGWMSLGGILLCMTGSEAMFADLGHFSYSAIQLAFTTLVYPALILGYMGQAAYLSKHHTLNSTYQIGYYISVPESVRWPVLVLAILASVVGSQAIISGTFSIINQSQSLSCFPRVKVVHTSENIHGQIYIPEINWLLMVLCIAVTVGFRDTKHMGNASGLAVITVMLVTTCLTSLVIMLCWHRSPALALVFFLFFGSIEVLYFSASLIKFREGAWLPIMLALILMAVMFIWHHTTIKKYEFDLHNKVTLEWLLALGDKLGMVRVPGIGLVYTDLTSGVPANFSRFVTNLPAFHRVLVFVCVKSVPVPHVLPAERYLVGRVGPAGHRSYRCIVRYGYRDVHQDVDSFEAELVESLATFIKLDALYHRCSDAGSGSEQLDDGRYERENALTVIGTNPLRRCLSYEASHDGVSSVDAARSPNGIVEVPAAAAAAPVTKKVRFVVEAASPEVEKGVVEELQELCEAREAGTAFILGHSHVQTKPGSSLLKKLAVGVGYNFLRRNCRGPDVVLRVPPASLLEVGMVYVL.

Residues 1–21 (MDPEFGRGMAPRKREPWRTTL) are Cytoplasmic-facing. A helical membrane pass occupies residues 22–42 (LLAYQSLGVVYGDLSISPLYV). The Extracellular segment spans residues 43 to 59 (YKSTFAEDITHSESNEE). Residues 60–80 (IFGVLSFVFWTLTLIPLIKYV) form a helical membrane-spanning segment. Residues 81-151 (SIVLRADDNG…EKHKTLQTAL (71 aa)) are Cytoplasmic-facing. Residues 152–172 (LIMVMIGTCMVIGDGVLTPAI) form a helical membrane-spanning segment. Topologically, residues 173–191 (SVFSAVSGLELSLSRDQHE) are extracellular. Residues 192–212 (YAVIPITCVILVFLFALQHYG) traverse the membrane as a helical segment. Over 213–215 (THR) the chain is Cytoplasmic. The helical transmembrane segment at 216 to 236 (VGFLFAPIVLAWLICMSMLGL) threads the bilayer. Topologically, residues 237–264 (YNIIHWNPQVYRALNPYYMLKFLRKTKK) are extracellular. Residues 265–285 (SGWMSLGGILLCMTGSEAMFA) form a helical membrane-spanning segment. Residues 286-292 (DLGHFSY) are Cytoplasmic-facing. Residues 293 to 313 (SAIQLAFTTLVYPALILGYMG) form a helical membrane-spanning segment. Residues 314–343 (QAAYLSKHHTLNSTYQIGYYISVPESVRWP) are Extracellular-facing. Asparagine 325 carries N-linked (GlcNAc...) asparagine glycosylation. Residues 344 to 364 (VLVLAILASVVGSQAIISGTF) form a helical membrane-spanning segment. Residues 365–391 (SIINQSQSLSCFPRVKVVHTSENIHGQ) lie on the Cytoplasmic side of the membrane. Residues 392-412 (IYIPEINWLLMVLCIAVTVGF) form a helical membrane-spanning segment. Over 413–422 (RDTKHMGNAS) the chain is Extracellular. Asparagine 420 carries N-linked (GlcNAc...) asparagine glycosylation. A helical membrane pass occupies residues 423–443 (GLAVITVMLVTTCLTSLVIML). Residues 444–451 (CWHRSPAL) lie on the Cytoplasmic side of the membrane. Residues 452–472 (ALVFFLFFGSIEVLYFSASLI) form a helical membrane-spanning segment. Over 473–476 (KFRE) the chain is Extracellular. Residues 477 to 497 (GAWLPIMLALILMAVMFIWHH) traverse the membrane as a helical segment. Over 498–788 (TTIKKYEFDL…LLEVGMVYVL (291 aa)) the chain is Cytoplasmic.

It belongs to the HAK/KUP transporter (TC 2.A.72.3) family.

The protein resides in the membrane. In terms of biological role, high-affinity potassium transporter. In Oryza sativa subsp. japonica (Rice), this protein is Probable potassium transporter 9 (HAK9).